Here is a 70-residue protein sequence, read N- to C-terminus: Large ribosomal subunit protein bL31 (70 aa).

Zn(2+)-binding residues include cysteine 16, cysteine 18, cysteine 38, and cysteine 41.

It belongs to the bacterial ribosomal protein bL31 family. Type A subfamily. Part of the 50S ribosomal subunit. Zn(2+) is required as a cofactor.

Its function is as follows. Binds the 23S rRNA. The sequence is that of Large ribosomal subunit protein bL31 from Mycolicibacterium gilvum (strain PYR-GCK) (Mycobacterium gilvum (strain PYR-GCK)).